Reading from the N-terminus, the 103-residue chain is Large ribosomal subunit protein bL21 (103 aa).

This sequence belongs to the bacterial ribosomal protein bL21 family. Part of the 50S ribosomal subunit. Contacts protein L20.

Functionally, this protein binds to 23S rRNA in the presence of protein L20. The chain is Large ribosomal subunit protein bL21 from Aeromonas hydrophila subsp. hydrophila (strain ATCC 7966 / DSM 30187 / BCRC 13018 / CCUG 14551 / JCM 1027 / KCTC 2358 / NCIMB 9240 / NCTC 8049).